Reading from the N-terminus, the 642-residue chain is Threonine--tRNA ligase (642 aa).

The 61-residue stretch at 1-61 folds into the TGS domain; that stretch reads MPIITLPDGS…EADASLAIIT (61 aa). Residues 243–534 are catalytic; sequence DHRKIGKQLD…LTEEYAGLFP (292 aa). The Zn(2+) site is built by cysteine 334, histidine 385, and histidine 511.

It belongs to the class-II aminoacyl-tRNA synthetase family. As to quaternary structure, homodimer. Requires Zn(2+) as cofactor.

Its subcellular location is the cytoplasm. The enzyme catalyses tRNA(Thr) + L-threonine + ATP = L-threonyl-tRNA(Thr) + AMP + diphosphate + H(+). Functionally, catalyzes the attachment of threonine to tRNA(Thr) in a two-step reaction: L-threonine is first activated by ATP to form Thr-AMP and then transferred to the acceptor end of tRNA(Thr). Also edits incorrectly charged L-seryl-tRNA(Thr). The polypeptide is Threonine--tRNA ligase (Aeromonas hydrophila subsp. hydrophila (strain ATCC 7966 / DSM 30187 / BCRC 13018 / CCUG 14551 / JCM 1027 / KCTC 2358 / NCIMB 9240 / NCTC 8049)).